The chain runs to 447 residues: Asparagine--tRNA ligase (447 aa).

It belongs to the class-II aminoacyl-tRNA synthetase family. In terms of assembly, homodimer.

Its subcellular location is the cytoplasm. It carries out the reaction tRNA(Asn) + L-asparagine + ATP = L-asparaginyl-tRNA(Asn) + AMP + diphosphate + H(+). This chain is Asparagine--tRNA ligase, found in Mycoplasma mobile (strain ATCC 43663 / 163K / NCTC 11711) (Mesomycoplasma mobile).